A 339-amino-acid polypeptide reads, in one-letter code: Ketol-acid reductoisomerase (NADP(+)) (339 aa).

Positions 1–182 (MPNRYYEKDG…GCLKAGVIDT (182 aa)) constitute a KARI N-terminal Rossmann domain. Residues 25–28 (YGSQ), Ser-51, Ser-53, and 83–86 (DHIQ) each bind NADP(+). Residue His-108 is part of the active site. Gly-134 lines the NADP(+) pocket. The 146-residue stretch at 183-328 (NFREETESDL…RELREMMTFL (146 aa)) folds into the KARI C-terminal knotted domain. Mg(2+) contacts are provided by Asp-191, Glu-195, Glu-227, and Glu-231. Ser-252 contributes to the substrate binding site.

This sequence belongs to the ketol-acid reductoisomerase family. Mg(2+) is required as a cofactor.

It catalyses the reaction (2R)-2,3-dihydroxy-3-methylbutanoate + NADP(+) = (2S)-2-acetolactate + NADPH + H(+). The catalysed reaction is (2R,3R)-2,3-dihydroxy-3-methylpentanoate + NADP(+) = (S)-2-ethyl-2-hydroxy-3-oxobutanoate + NADPH + H(+). It functions in the pathway amino-acid biosynthesis; L-isoleucine biosynthesis; L-isoleucine from 2-oxobutanoate: step 2/4. Its pathway is amino-acid biosynthesis; L-valine biosynthesis; L-valine from pyruvate: step 2/4. In terms of biological role, involved in the biosynthesis of branched-chain amino acids (BCAA). Catalyzes an alkyl-migration followed by a ketol-acid reduction of (S)-2-acetolactate (S2AL) to yield (R)-2,3-dihydroxy-isovalerate. In the isomerase reaction, S2AL is rearranged via a Mg-dependent methyl migration to produce 3-hydroxy-3-methyl-2-ketobutyrate (HMKB). In the reductase reaction, this 2-ketoacid undergoes a metal-dependent reduction by NADPH to yield (R)-2,3-dihydroxy-isovalerate. In Solibacter usitatus (strain Ellin6076), this protein is Ketol-acid reductoisomerase (NADP(+)).